An 886-amino-acid polypeptide reads, in one-letter code: MAKTKDKSIFVSSVDSDSDIEEIIMPPKPPVEVIQLDDSDDECQDICKPIYNKKVHKDPIVRVSYRQRIPESYFPGISTSLINVQREHNNRSKYDTWGSNSCSEPRISISNIERLEKPSYHEARRVPVFERLERSREISNGRNNQNPIRFNHKFVPPINRQTPLFNNQQLLVNVPFNEHHPTFLEPRPFYRSNVNEYNAGGLNRGSFRKMGRLNMEIVRDNDDFEEHFLAPNFPAKSASIDRRVDDSLSSNSYLRSGMIMASSERLEDPRFSGRLPVFARQINNQEINNDNFYQNSICYNHNNYPSNLESRVSFPFEARHHDADGLNRGRYQVMEHVNMGIMRNSEDFEDYDITQTDQDNHFYNDKDSGKHHRHRHRSKNNKKHKKHYDRNESGNSSECREEDDYEISNPSEKRHERKKRQRSSHRKESACVDEDNYILDEDRFYQQESDEYHNSLEMEREYEHGMDVGVKKEHSYKCDDIARNARKRARLTDDDMARREELFKEWSYSKEIVDGVTQLFGGPPRESERHQKKQKELVFEADRTAMHALSIRSGALVKARLLEIHYATGCHLIFLEEVKRGGYTYVELKGDPEHIKNAQKMIDDMVIDEHYIHDGRESIVYFYNAPHELRNTRGFDLNCRSIEKYCGIIIEKMREVFGIGGYVSTAPLKLTGSVNSIHMARETMQSKTKRFLDEEKFKETVEHCTPISFYRKIIGRCGENLKTIEKVTRTAIVFKRSFDNNEACFSIRGRTDNIKQAIEKIEEITHENQPADDDPGIFQVRVPENMVARLIGRHGVEINRIRSESKAKCYLNAIRGNLDDKFMVCSGGVEEAAYAAYLTKVKIGIIDPKVIQFNSDDFNNLSKVKPMEDPRLVMLKKRYAERKECK.

The span at 359–368 (DNHFYNDKDS) shows a compositional bias: basic and acidic residues. The interval 359–433 (DNHFYNDKDS…SHRKESACVD (75 aa)) is disordered. Basic residues-rich tracts occupy residues 369–388 (GKHH…KKHY) and 415–425 (HERKKRQRSSH). 2 consecutive KH domains span residues 698-761 (KETV…IEKI) and 775-839 (PGIF…AYLT).

This chain is KH domain-containing protein hrpk-2, found in Caenorhabditis elegans.